We begin with the raw amino-acid sequence, 196 residues long: Probable malonic semialdehyde reductase RutE (196 aa).

Belongs to the nitroreductase family. HadB/RutE subfamily. FMN is required as a cofactor.

It catalyses the reaction 3-hydroxypropanoate + NADP(+) = 3-oxopropanoate + NADPH + H(+). In terms of biological role, may reduce toxic product malonic semialdehyde to 3-hydroxypropionic acid, which is excreted. This is Probable malonic semialdehyde reductase RutE from Cronobacter sakazakii (strain ATCC BAA-894) (Enterobacter sakazakii).